The chain runs to 505 residues: Exoglucanase 1 (505 aa).

Positions 1 to 17 (MYRKLAVISAFLAAARA) are cleaved as a signal peptide. Pyrrolidone carboxylic acid is present on Q18. The interval 18 to 449 (QQVCTQQAET…GSTGGNTGSN (432 aa)) is catalytic. 4 disulfides stabilise this stretch: C21–C88, C36–C41, C66–C87, and C77–C83. N93 and N126 each carry an N-linked (GlcNAc...) asparagine glycan. 6 disulfide bridges follow: C151–C410, C185–C223, C189–C222, C243–C269, C251–C256, and C274–C344. E225 serves as the catalytic Nucleophile. Residue E230 is the Proton donor/acceptor of the active site. N-linked (GlcNAc...) asparagine glycosylation is found at N283 and N397. Disordered regions lie at residues 399–423 (TAST…VEAQ) and 440–472 (GSTG…ATQT). Positions 409 to 423 (SCSTSSGVPAQVEAQ) are enriched in polar residues. A compositionally biased stretch (low complexity) spans 447–470 (GSNPPGTSTTRAPPSSTGSSPTAT). Positions 450–468 (PPGTSTTRAPPSSTGSSPT) are linker. The CBM1 domain occupies 469-505 (ATQTHYGQCGGTGWTGPTRCASGYTCQVLNPFYSQCL).

The protein belongs to the glycosyl hydrolase 7 (cellulase C) family. Post-translationally, O-glycosylated. O-glycosylation of the cellulase linker provides protection from proteolysis. Linker glycans also contribute to binding affinity of cellobiohydrolases to cellulose.

The protein resides in the secreted. The enzyme catalyses Hydrolysis of (1-&gt;4)-beta-D-glucosidic linkages in cellulose and cellotetraose, releasing cellobiose from the non-reducing ends of the chains.. Exocellobiohydrolases (CBH) that catalyzes the hydrolysis of 1,4-beta-D-glucosidic bonds in cellulose to release the disaccharide cellobiose. The degradation of cellulose involves an interplay between different cellulolytic enzymes. Hydrolysis starts with endoglucanases (EGs), which cut internal beta-1,4-glucosidic bonds in cellulose to reduce the polymerization degree of the substrate and create new chain ends for exocellobiohydrolases (CBHs). The CBHs release the disaccharide cellobiose from the non-reducing end of the cellulose polymer chain. Finally, beta-1,4-glucosidases hydrolyze the cellobiose and other short cello-oligosaccharides into glucose units. The protein is Exoglucanase 1 (cbh1) of Trichoderma harzianum (Hypocrea lixii).